Consider the following 289-residue polypeptide: MGASLNEIKTKIASTKKTSQITGAMQMVSAAKLQKAESHAKAFQTYAEKVRKITTDLVSSDNEPAKNPMMIKREVKKTGYLVITSDRGLVGSYNSNILKSVISNIRKRHTNESEYTILALGGTGADFFKARNVKVSYVLRGLSDQPTFEEVRAIVTEAVEEYQAEEFDELYVCYNHHVNSLVSEARMEKMLPISFDEKGDEKASLVTFELEPDRETILNQLLPQYAESMIYGSIVDAKTAEHAAGMTAMRTATDNAHSVINDLTIQYNRARQASITQEITEIVAGASAL.

The protein belongs to the ATPase gamma chain family. As to quaternary structure, F-type ATPases have 2 components, CF(1) - the catalytic core - and CF(0) - the membrane proton channel. CF(1) has five subunits: alpha(3), beta(3), gamma(1), delta(1), epsilon(1). CF(0) has three main subunits: a, b and c.

The protein resides in the cell membrane. Its function is as follows. Produces ATP from ADP in the presence of a proton gradient across the membrane. The gamma chain is believed to be important in regulating ATPase activity and the flow of protons through the CF(0) complex. The protein is ATP synthase gamma chain of Lactococcus lactis subsp. cremoris (strain MG1363).